The sequence spans 490 residues: Glutamate--tRNA ligase (490 aa).

The 'HIGH' region signature appears at 15-25 (PSPTGYLHVGG). The 'KMSKS' region signature appears at 259-263 (KLSKR). K262 contacts ATP.

Belongs to the class-I aminoacyl-tRNA synthetase family. Glutamate--tRNA ligase type 1 subfamily. As to quaternary structure, monomer.

The protein localises to the cytoplasm. It catalyses the reaction tRNA(Glu) + L-glutamate + ATP = L-glutamyl-tRNA(Glu) + AMP + diphosphate. Its function is as follows. Catalyzes the attachment of glutamate to tRNA(Glu) in a two-step reaction: glutamate is first activated by ATP to form Glu-AMP and then transferred to the acceptor end of tRNA(Glu). This Bdellovibrio bacteriovorus (strain ATCC 15356 / DSM 50701 / NCIMB 9529 / HD100) protein is Glutamate--tRNA ligase.